A 502-amino-acid chain; its full sequence is Cytochrome P450 71B19 (502 aa).

A helical membrane pass occupies residues 1–21 (MAISFLCVFLITFVSLIFFAK). C444 contributes to the heme binding site.

This sequence belongs to the cytochrome P450 family. Heme serves as cofactor.

It localises to the membrane. The sequence is that of Cytochrome P450 71B19 (CYP71B19) from Arabidopsis thaliana (Mouse-ear cress).